Here is a 555-residue protein sequence, read N- to C-terminus: Probable apyrase 6 (555 aa).

A compositionally biased stretch (basic residues) spans 1–10; it reads MRRSHARSRV. The tract at residues 1–45 is disordered; sequence MRRSHARSRVKNSSSSKSDMDPIKFQIRSGNRAPSSSSTYTLTKP. Over 1–55 the chain is Cytoplasmic; that stretch reads MRRSHARSRVKNSSSSKSDMDPIKFQIRSGNRAPSSSSTYTLTKPNSKHAKSNLL. Positions 28-45 are enriched in polar residues; sequence RSGNRAPSSSSTYTLTKP. Residues 56-76 form a helical membrane-spanning segment; sequence LTVGSISVVLGVLFLCYSILF. At 77–512 the chain is on the extracellular side; the sequence is SGGNLRGSLR…HALFSNHPKT (436 aa). Residue 89 to 99 coordinates ATP; sequence VVIDGGSTGTR. E212 acts as the Proton acceptor in catalysis. 236 to 246 serves as a coordination point for ATP; it reads GIVELGGASAQ. N-linked (GlcNAc...) asparagine glycans are attached at residues N267 and N348. The helical transmembrane segment at 513 to 533 threads the bilayer; that stretch reads LHYLIGIPILMTVLVYLVTKW. Topologically, residues 534–555 are cytoplasmic; sequence RKPQLKTIYDLEKGRYIVTRIR.

The protein belongs to the GDA1/CD39 NTPase family. The cofactor is Ca(2+). As to expression, detected in mature pollen grains (at the protein level). Also expressed in the veins and hydathode regions of rosette leaves.

It is found in the cytoplasmic vesicle membrane. It catalyses the reaction a ribonucleoside 5'-triphosphate + 2 H2O = a ribonucleoside 5'-phosphate + 2 phosphate + 2 H(+). Catalyzes the hydrolysis of phosphoanhydride bonds of nucleoside tri- and di-phosphates. Involved in the regulation of pollen and anther development. This Arabidopsis thaliana (Mouse-ear cress) protein is Probable apyrase 6 (APY6).